A 332-amino-acid polypeptide reads, in one-letter code: 2,3-diketo-L-gulonate reductase (332 aa).

Catalysis depends on histidine 44, which acts as the Proton donor. Residues 168–174 (ITMVDMS), 224–225 (WK), and 304–306 (GHE) each bind NAD(+).

This sequence belongs to the LDH2/MDH2 oxidoreductase family. DlgD subfamily. In terms of assembly, homodimer.

The protein resides in the cytoplasm. It catalyses the reaction 3-dehydro-L-gulonate + NAD(+) = 2,3-dioxo-L-gulonate + NADH + H(+). The enzyme catalyses 3-dehydro-L-gulonate + NADP(+) = 2,3-dioxo-L-gulonate + NADPH + H(+). Its function is as follows. Catalyzes the reduction of 2,3-diketo-L-gulonate in the presence of NADH, to form 3-keto-L-gulonate. This chain is 2,3-diketo-L-gulonate reductase, found in Escherichia coli O81 (strain ED1a).